Consider the following 508-residue polypeptide: Histidine ammonia-lyase (508 aa).

Positions 143–145 (ASG) form a cross-link, 5-imidazolinone (Ala-Gly). Position 144 is a 2,3-didehydroalanine (Ser) (Ser-144).

The protein belongs to the PAL/histidase family. Contains an active site 4-methylidene-imidazol-5-one (MIO), which is formed autocatalytically by cyclization and dehydration of residues Ala-Ser-Gly.

It is found in the cytoplasm. The enzyme catalyses L-histidine = trans-urocanate + NH4(+). The protein operates within amino-acid degradation; L-histidine degradation into L-glutamate; N-formimidoyl-L-glutamate from L-histidine: step 1/3. The polypeptide is Histidine ammonia-lyase (Caldanaerobacter subterraneus subsp. tengcongensis (strain DSM 15242 / JCM 11007 / NBRC 100824 / MB4) (Thermoanaerobacter tengcongensis)).